We begin with the raw amino-acid sequence, 441 residues long: Xylose isomerase (441 aa).

Catalysis depends on residues His99 and Asp102. Mg(2+) contacts are provided by Glu230, Glu266, His269, Asp294, Asp305, Asp307, and Asp337.

It belongs to the xylose isomerase family. In terms of assembly, homotetramer. The cofactor is Mg(2+).

The protein localises to the cytoplasm. It carries out the reaction alpha-D-xylose = alpha-D-xylulofuranose. Exhibits xylose isomerase activity. This chain is Xylose isomerase (xylA), found in Bacillus sp. (strain LW2).